Consider the following 599-residue polypeptide: Glucose-6-phosphate 1-dehydrogenase 3, chloroplastic (599 aa).

Residues 1-18 (MSSLSCPTYRSRTSSSSP) show a composition bias toward low complexity. Positions 1 to 23 (MSSLSCPTYRSRTSSSSPFLSNH) are disordered. Residues 1–66 (MSSLSCPTYR…RSQRRSVQSS (66 aa)) constitute a chloroplast transit peptide. Val67 carries the N-acetylvaline modification. NADP(+) contacts are provided by residues 119-126 (GASGDLAK) and Arg153. The cysteines at positions 171 and 179 are disulfide-linked. Lys256 contributes to the NADP(+) binding site. Residues Lys256, 286–290 (HYLGK), Glu324, and Asp343 each bind D-glucose 6-phosphate. The active-site Proton acceptor is His348. An NADP(+)-binding site is contributed by Lys441. Residues Lys444 and Arg449 each coordinate D-glucose 6-phosphate. Arg454 and Arg483 together coordinate NADP(+). Gln485 serves as a coordination point for D-glucose 6-phosphate. NADP(+)-binding positions include 491 to 493 (YLK) and Arg576.

The protein belongs to the glucose-6-phosphate dehydrogenase family. In terms of assembly, forms homodimer. Interacts with G6PD1. Expressed in roots, flowers and siliques.

The protein resides in the plastid. It localises to the chloroplast stroma. It catalyses the reaction D-glucose 6-phosphate + NADP(+) = 6-phospho-D-glucono-1,5-lactone + NADPH + H(+). It functions in the pathway carbohydrate degradation; pentose phosphate pathway; D-ribulose 5-phosphate from D-glucose 6-phosphate (oxidative stage): step 1/3. Regulated by metabolites. Post-translationally inactivated by cysteine-mediated redox modification via the ferredoxin-thioredoxin system in the light and this avoids futile cycles with photosynthetic CO2 fixation. Functionally, catalyzes the rate-limiting step of the oxidative pentose-phosphate pathway, which represents a route for the dissimilation of carbohydrates besides glycolysis. The main function of this enzyme is to provide reducing power (NADPH) and pentose phosphates for fatty acid and nucleic acid synthesis which are involved in membrane synthesis and cell division. This Arabidopsis thaliana (Mouse-ear cress) protein is Glucose-6-phosphate 1-dehydrogenase 3, chloroplastic.